Here is a 117-residue protein sequence, read N- to C-terminus: Large ribosomal subunit protein uL18 (117 aa).

It belongs to the universal ribosomal protein uL18 family. As to quaternary structure, part of the 50S ribosomal subunit; part of the 5S rRNA/L5/L18/L25 subcomplex. Contacts the 5S and 23S rRNAs.

In terms of biological role, this is one of the proteins that bind and probably mediate the attachment of the 5S RNA into the large ribosomal subunit, where it forms part of the central protuberance. In Methylobacillus flagellatus (strain ATCC 51484 / DSM 6875 / VKM B-1610 / KT), this protein is Large ribosomal subunit protein uL18.